A 751-amino-acid polypeptide reads, in one-letter code: Probable alpha-galactosidase C (751 aa).

Positions 1 to 27 (MFGSPKRAALAAASLLAIFGNGPSVMA) are cleaved as a signal peptide. Residues asparagine 49, asparagine 57, asparagine 162, asparagine 186, asparagine 194, asparagine 366, asparagine 433, asparagine 452, and asparagine 500 are each glycosylated (N-linked (GlcNAc...) asparagine). Aspartate 510 functions as the Nucleophile in the catalytic mechanism. Residue aspartate 572 is the Proton donor of the active site. The N-linked (GlcNAc...) asparagine glycan is linked to asparagine 720.

Belongs to the glycosyl hydrolase 36 family. In terms of assembly, homotetramer. Requires Mg(2+) as cofactor. NAD(+) serves as cofactor.

It localises to the secreted. It carries out the reaction Hydrolysis of terminal, non-reducing alpha-D-galactose residues in alpha-D-galactosides, including galactose oligosaccharides, galactomannans and galactolipids.. Functionally, hydrolyzes a variety of simple alpha-D-galactoside as well as more complex molecules such as oligosaccharides and polysaccharides. The chain is Probable alpha-galactosidase C (aglC) from Aspergillus flavus (strain ATCC 200026 / FGSC A1120 / IAM 13836 / NRRL 3357 / JCM 12722 / SRRC 167).